We begin with the raw amino-acid sequence, 971 residues long: Lon protease homolog, mitochondrial (971 aa).

Residues 1–55 constitute a mitochondrion transit peptide; the sequence is MYRAGAVLLRGATRTRLLAAASAHQSFATFSQRNQSILMMKSMELAGNSGERRFY. Positions 89–359 constitute a Lon N-terminal domain; the sequence is VPMLAINRYP…IALLLIQKEK (271 aa). A disordered region spans residues 190–255; sequence TPKNETPLNG…PPSATGEKQK (66 aa). Residues 214–224 are compositionally biased toward pro residues; it reads LTPPPSPPPLA. 512–519 contributes to the ATP binding site; the sequence is GPPGVGKT. Residues 718-749 form a disordered region; the sequence is AEQQNEDEEPAEKATTAITENSEAEPITSTSS. Residues 733-749 show a composition bias toward polar residues; that stretch reads TAITENSEAEPITSTSS. One can recognise a Lon proteolytic domain in the interval 784 to 971; the sequence is VTPPGVIMGL…YDELYEHLFQ (188 aa). Active-site residues include Ser878 and Lys921.

This sequence belongs to the peptidase S16 family. Homohexamer or homoheptamer. Organized in a ring with a central cavity.

It is found in the mitochondrion matrix. The enzyme catalyses Hydrolysis of proteins in presence of ATP.. Functionally, ATP-dependent serine protease that mediates the selective degradation of misfolded, unassembled or oxidatively damaged polypeptides as well as certain short-lived regulatory proteins in the mitochondrial matrix. May also have a chaperone function in the assembly of inner membrane protein complexes. Participates in the regulation of mitochondrial gene expression and in the maintenance of the integrity of the mitochondrial genome. Binds to mitochondrial DNA in a site-specific manner. Involved in the degradation of transcription factor atfs-1 in the mitochondrion. In Caenorhabditis elegans, this protein is Lon protease homolog, mitochondrial.